Reading from the N-terminus, the 588-residue chain is Adenine deaminase (588 aa).

It belongs to the metallo-dependent hydrolases superfamily. Adenine deaminase family. In terms of assembly, homodimer. Requires Mn(2+) as cofactor.

It catalyses the reaction adenine + H2O + H(+) = hypoxanthine + NH4(+). The sequence is that of Adenine deaminase from Escherichia fergusonii (strain ATCC 35469 / DSM 13698 / CCUG 18766 / IAM 14443 / JCM 21226 / LMG 7866 / NBRC 102419 / NCTC 12128 / CDC 0568-73).